Reading from the N-terminus, the 314-residue chain is Putative methylthioribose-1-phosphate isomerase (314 aa).

Residues 45–47 (RGA), Arg-79, and Gln-177 contribute to the substrate site. Asp-218 serves as the catalytic Proton donor. 227 to 228 (NK) is a binding site for substrate.

It belongs to the eIF-2B alpha/beta/delta subunits family. MtnA subfamily.

It carries out the reaction 5-(methylsulfanyl)-alpha-D-ribose 1-phosphate = 5-(methylsulfanyl)-D-ribulose 1-phosphate. Functionally, catalyzes the interconversion of methylthioribose-1-phosphate (MTR-1-P) into methylthioribulose-1-phosphate (MTRu-1-P). The chain is Putative methylthioribose-1-phosphate isomerase from Methanosphaera stadtmanae (strain ATCC 43021 / DSM 3091 / JCM 11832 / MCB-3).